We begin with the raw amino-acid sequence, 321 residues long: MRAAINRANSLGGLFSFRFIRNIKSMSSSTSQDFVSRPVIKKVFAKLQKEGDGAVVRRGISRSEQKLLDPFLMLDEFSVSPPAGFPDHPHRGFETVTYVLEGGITHQDFKGHKGTIYAGDVQWMTAGRGIIHSEMPEEEVNKGLQLWINLSSNEKMIEPNYQELSHSDIPKAEQNGVEVKVIAGESMGIQSPVYTRTPTMFLDFTLQPGAQIHQNVPESWNAFAYILESGEGGGVFSSSNSSPIPAHSVVVFGPGNDGVSVWNKSSSKQLRFVLIAGEPIGEPVVQYGPFVMNTQAEIDMTIEDYHYGKNGFEMAKYWRSQ.

Positions 88, 90, 132, and 134 each coordinate Fe cation.

It belongs to the pirin family. In terms of assembly, interacts with RD21A, RD21B and XCP2.

It localises to the cytoplasm. The protein resides in the cytosol. The protein localises to the nucleus. Functionally, involved in susceptibility to the bacterial plant pathogen Ralstonia solanacearum. Stabilizes the xylem cysteine protease XCP2 by blocking its autolysis. This is Pirin-like protein 2 from Arabidopsis thaliana (Mouse-ear cress).